Reading from the N-terminus, the 120-residue chain is Myohemerythrin (120 aa).

Residues histidine 26, histidine 56, glutamate 60, histidine 75, histidine 79, histidine 108, and aspartate 113 each contribute to the Fe cation site.

It belongs to the hemerythrin family. As to quaternary structure, monomer.

Its subcellular location is the cytoplasm. Myohemerythrin is an oxygen-binding protein found in the retractor muscles of certain worms. The oxygen-binding site contains two iron atoms. This is Myohemerythrin from Theromyzon tessulatum (Duck leech).